The sequence spans 202 residues: MIVKICGLKKAVDVQAAVENGADMIGFVFAKSKRQVTIEQAHELAKNIPTNIKKVGVFVNPTEEELTAAIKGVPLDIVQLHGQEPTSQAERTDAEVIKAFPVKEGKLPDNISDYKNAYILLDAPAEEYEGGSGKTFDWDKINSDVLLKNKLIIAGGLNAENVQEAIHRFEPYGVDISSGVETNGEKDPEKIEIFIKTAKGVE.

It belongs to the TrpF family.

It carries out the reaction N-(5-phospho-beta-D-ribosyl)anthranilate = 1-(2-carboxyphenylamino)-1-deoxy-D-ribulose 5-phosphate. The protein operates within amino-acid biosynthesis; L-tryptophan biosynthesis; L-tryptophan from chorismate: step 3/5. This chain is N-(5'-phosphoribosyl)anthranilate isomerase, found in Listeria welshimeri serovar 6b (strain ATCC 35897 / DSM 20650 / CCUG 15529 / CIP 8149 / NCTC 11857 / SLCC 5334 / V8).